Consider the following 429-residue polypeptide: Probable electron transfer flavoprotein-quinone oxidoreductase YdiS (429 aa).

Position 8–22 (8–22 (AIVVGAGVAGSVAAL)) interacts with FAD.

The protein belongs to the ETF-QO/FixC family. FAD serves as cofactor.

Probably accepts electrons from YdiQ/YdiR and reduces a quinone. This Escherichia coli (strain K12) protein is Probable electron transfer flavoprotein-quinone oxidoreductase YdiS (ydiS).